The chain runs to 61 residues: Large ribosomal subunit protein uL29 (61 aa).

The protein belongs to the universal ribosomal protein uL29 family.

The sequence is that of Large ribosomal subunit protein uL29 from Xanthomonas euvesicatoria pv. vesicatoria (strain 85-10) (Xanthomonas campestris pv. vesicatoria).